A 201-amino-acid polypeptide reads, in one-letter code: Large ribosomal subunit protein uL4 (201 aa).

Positions 44-71 (RAQKTRAEVSGSGKKPWRQKGTGRARSG) are disordered.

This sequence belongs to the universal ribosomal protein uL4 family. As to quaternary structure, part of the 50S ribosomal subunit.

Its function is as follows. One of the primary rRNA binding proteins, this protein initially binds near the 5'-end of the 23S rRNA. It is important during the early stages of 50S assembly. It makes multiple contacts with different domains of the 23S rRNA in the assembled 50S subunit and ribosome. Functionally, forms part of the polypeptide exit tunnel. The chain is Large ribosomal subunit protein uL4 from Actinobacillus succinogenes (strain ATCC 55618 / DSM 22257 / CCUG 43843 / 130Z).